A 239-amino-acid chain; its full sequence is Probable fimbrial chaperone YehC (239 aa).

The N-terminal stretch at 1-31 (MAAIPWRPFNLRGIKMKGLLSLLIFSMVLPA) is a signal peptide.

This sequence belongs to the periplasmic pilus chaperone family.

The protein resides in the periplasm. Part of the yehABCD fimbrial operon. Could contribute to adhesion to various surfaces in specific environmental niches. The sequence is that of Probable fimbrial chaperone YehC (yehC) from Escherichia coli (strain K12).